The primary structure comprises 167 residues: Large ribosomal subunit protein uL10 (167 aa).

Belongs to the universal ribosomal protein uL10 family. In terms of assembly, part of the ribosomal stalk of the 50S ribosomal subunit. The N-terminus interacts with L11 and the large rRNA to form the base of the stalk. The C-terminus forms an elongated spine to which L12 dimers bind in a sequential fashion forming a multimeric L10(L12)X complex.

Functionally, forms part of the ribosomal stalk, playing a central role in the interaction of the ribosome with GTP-bound translation factors. The chain is Large ribosomal subunit protein uL10 from Dichelobacter nodosus (strain VCS1703A).